The sequence spans 379 residues: MSLKNIKPDQLKNLFQQNIPLMDVRAPVEFSQGSIPGAVNLPVMNDDERAQVGTVYKNQGNEAAVKLGHELVSGLVKEQRVAAWKSFVQAHPEAVFYCFRGGQRSRISQAWLKEAGVERPLLVGGFKAARNYLIKQIEEFSVRQELISVSGPTGSGKTHFLRGLKGCPVIDLEALARHRGSAFGNWEVPQPTQVDYENNLAREILLLEDKIHGKIKPLVEDESRLIGRISQPATFFIRLRSSPVIWIDEPLPVRVDNVFDDYILNSSIGKSLEAAPRCAEENDILRAQALQLFARYRQSLLAIQRKLGGLRAQEVMADLEKAELAYLNHAELSGNKVWIEKLLQYYYDPMYLGSLERRHVTVLFKGTRFEAEKFVHSLT.

One can recognise a Rhodanese domain in the interval 15-138; sequence FQQNIPLMDV…ARNYLIKQIE (124 aa). Catalysis depends on cysteine 98, which acts as the S-selanylcysteine intermediate.

Belongs to the SelU family. Monomer.

The enzyme catalyses 5-methylaminomethyl-2-thiouridine(34) in tRNA + selenophosphate + (2E)-geranyl diphosphate + H2O + H(+) = 5-methylaminomethyl-2-selenouridine(34) in tRNA + (2E)-thiogeraniol + phosphate + diphosphate. It carries out the reaction 5-methylaminomethyl-2-thiouridine(34) in tRNA + (2E)-geranyl diphosphate = 5-methylaminomethyl-S-(2E)-geranyl-thiouridine(34) in tRNA + diphosphate. It catalyses the reaction 5-methylaminomethyl-S-(2E)-geranyl-thiouridine(34) in tRNA + selenophosphate + H(+) = 5-methylaminomethyl-2-(Se-phospho)selenouridine(34) in tRNA + (2E)-thiogeraniol. The catalysed reaction is 5-methylaminomethyl-2-(Se-phospho)selenouridine(34) in tRNA + H2O = 5-methylaminomethyl-2-selenouridine(34) in tRNA + phosphate. Its function is as follows. Involved in the post-transcriptional modification of the uridine at the wobble position (U34) of tRNA(Lys), tRNA(Glu) and tRNA(Gln). Catalyzes the conversion of 2-thiouridine (S2U-RNA) to 2-selenouridine (Se2U-RNA). Acts in a two-step process involving geranylation of 2-thiouridine (S2U) to S-geranyl-2-thiouridine (geS2U) and subsequent selenation of the latter derivative to 2-selenouridine (Se2U) in the tRNA chain. The chain is tRNA 2-selenouridine synthase from Bdellovibrio bacteriovorus (strain ATCC 15356 / DSM 50701 / NCIMB 9529 / HD100).